Here is a 341-residue protein sequence, read N- to C-terminus: UDP-glucose 4-epimerase (341 aa).

Belongs to the polysaccharide synthase family.

The catalysed reaction is UDP-alpha-D-glucose = UDP-alpha-D-galactose. Epimerizes UDP-galactose to UDP-glucose. The sequence is that of UDP-glucose 4-epimerase (capD) from Rickettsia akari (strain Hartford).